We begin with the raw amino-acid sequence, 843 residues long: Phosphatidylinositol-glycan-specific phospholipase D (843 aa).

The signal sequence occupies residues 1 to 23 (MSVGRLWSGLLLLLLFFCSRSSS). N-linked (GlcNAc...) asparagine glycosylation is found at Asn-94, Asn-271, Asn-292, Asn-308, and Asn-322. 7 FG-GAP repeats span residues 368 to 429 (SPSA…GLPP), 435 to 498 (DKEA…GRLS), 500 to 560 (SPNI…RNDK), 564 to 625 (TLDE…SLGR), 635 to 695 (QREI…GATR), 707 to 773 (ALFS…TLGD), and 791 to 843 (QYVL…FSSD). Residues Asn-483, Asn-502, Asn-592, Asn-605, and Asn-661 are each glycosylated (N-linked (GlcNAc...) asparagine).

It belongs to the GPLD1 family. Monomer. Post-translationally, glycosylated.

The protein resides in the secreted. The enzyme catalyses a 6-(alpha-D-glucosaminyl)-1-(1,2-diacyl-sn-glycero-3-phospho)-1D-myo-inositol + H2O = 6-(alpha-D-glucosaminyl)-1D-myo-inositol + a 1,2-diacyl-sn-glycero-3-phosphate + H(+). This protein hydrolyzes the inositol phosphate linkage in proteins anchored by phosphatidylinositol glycans (GPI-anchor) thus releasing these proteins from the membrane. This is Phosphatidylinositol-glycan-specific phospholipase D (Gpld1) from Rattus norvegicus (Rat).